The following is a 588-amino-acid chain: MDLARKEFLRGNGLAAGKMNISIDLDTNYAELVLNVGRVTLGENNRKKMKDCQLRKQQNENVSRAVCALLNSGGGVIKAEVENKGYSYKKDGIGLDLENSFSNMLPFVPNFLDFMQNGNYFHIFVKSWSLETSGPQIATLSSSLYKRDVTSAKVMNASAALEFLKDMEKTGGRAYLRPEFPAKRACVDVQEESNMEALAADFFNRTELGYKEKLTFTESTHVEIKNFSTEKLLQRITEILPQYVSAFANTDGGYLFVGLNEDKEVIGFKAEKSYLTKLEEVTKNSIGKLPVHHFCVEKGTINYLCKFLGVYDKGRLCGYVYALRVERFCCAVFAKKPDSWHVKDNRVKQLTEKEWIQFMVDSEPVCEELPSPASTSSPVSQSYPLREYINFKIQPLRYHLPGLSEKITCAPKTFCRNLFSQHEGLKQLICEEMGSVNKGSLIFSRSWSLDLGLQENHKVLCDALLISQDKPPVLYTFHMVQDEEFKDYSTQTAQTLKQKLAKIGGYTKKVCVMTKIFYLSPEGKTSCQYDLNSQVIYPESYYWTTAQTMKDLEKALSNILPKENQIFLFVCLFRFCLFVCWFVCFFLR.

The helical transmembrane segment at isoleucine 566–phenylalanine 586 threads the bilayer.

It belongs to the Schlafen family.

It localises to the membrane. This Homo sapiens (Human) protein is Schlafen family member 12-like (SLFN12L).